We begin with the raw amino-acid sequence, 852 residues long: DNA mismatch repair protein MutS (852 aa).

Residue 602–609 participates in ATP binding; that stretch reads GPNMSGKS.

It belongs to the DNA mismatch repair MutS family.

In terms of biological role, this protein is involved in the repair of mismatches in DNA. It is possible that it carries out the mismatch recognition step. This protein has a weak ATPase activity. The sequence is that of DNA mismatch repair protein MutS from Streptococcus thermophilus (strain CNRZ 1066).